The sequence spans 431 residues: Enolase (431 aa).

Q167 provides a ligand contact to (2R)-2-phosphoglycerate. E209 functions as the Proton donor in the catalytic mechanism. Residues D246, E289, and D316 each coordinate Mg(2+). Residues K341, R370, S371, and K392 each coordinate (2R)-2-phosphoglycerate. The active-site Proton acceptor is the K341.

Belongs to the enolase family. As to quaternary structure, component of the RNA degradosome, a multiprotein complex involved in RNA processing and mRNA degradation. Mg(2+) is required as a cofactor.

The protein resides in the cytoplasm. It localises to the secreted. Its subcellular location is the cell surface. It catalyses the reaction (2R)-2-phosphoglycerate = phosphoenolpyruvate + H2O. It participates in carbohydrate degradation; glycolysis; pyruvate from D-glyceraldehyde 3-phosphate: step 4/5. In terms of biological role, catalyzes the reversible conversion of 2-phosphoglycerate (2-PG) into phosphoenolpyruvate (PEP). It is essential for the degradation of carbohydrates via glycolysis. The protein is Enolase of Shewanella pealeana (strain ATCC 700345 / ANG-SQ1).